Consider the following 431-residue polypeptide: Synaptotagmin-11 (431 aa).

The Vesicular portion of the chain corresponds to 1 to 15 (MAEITNIRPSFDVSP). The chain crosses the membrane as a helical span at residues 16-36 (VVAGLIGASVLVVCVSVTVFV). The Cytoplasmic portion of the chain corresponds to 37-431 (WSCCHQQAEK…VAKWHSLSEY (395 aa)). Ser134 is modified (phosphoserine). Residues 134-154 (SPITSLTPGESKTTSPSSPEE) form a disordered region. A compositionally biased stretch (low complexity) spans 140–151 (TPGESKTTSPSS). C2 domains are found at residues 157–279 (MLGS…QLTR) and 291–426 (SRGE…AKWH). Residues Asp250, Ser253, and Asp256 each coordinate Ca(2+).

The protein belongs to the synaptotagmin family. In terms of assembly, homodimer. Can also form heterodimers. Interacts with PRKN. Interacts (via C2 2 domain) with AGO2 and SND1; the interaction with SND1 is direct. Interacts with KIF1A; the interaction increases in presence of calcium. Requires Ca(2+) as cofactor. In terms of processing, ubiquitinated, at least by PRKN, and targeted to the proteasome complex for degradation. Ubiquitination is inhibited by ATP13A2.

Its subcellular location is the cytoplasmic vesicle membrane. The protein localises to the perikaryon. The protein resides in the golgi apparatus. It localises to the trans-Golgi network membrane. It is found in the recycling endosome membrane. Its subcellular location is the lysosome membrane. The protein localises to the cytoplasmic vesicle. The protein resides in the phagosome. It localises to the cell projection. It is found in the axon. Its subcellular location is the dendrite. The protein localises to the postsynaptic density. The protein resides in the clathrin-coated vesicle membrane. In terms of biological role, synaptotagmin family member involved in vesicular and membrane trafficking which does not bind Ca(2+). Inhibits clathrin-mediated and bulk endocytosis, functions to ensure precision in vesicle retrieval. Plays an important role in dopamine transmission by regulating endocytosis and the vesicle-recycling process. Essential component of a neuronal vesicular trafficking pathway that differs from the synaptic vesicle trafficking pathway but is crucial for development and synaptic plasticity. In macrophages and microglia, inhibits the conventional cytokine secretion, of at least IL6 and TNF, and phagocytosis. In astrocytes, regulates lysosome exocytosis, mechanism required for the repair of injured astrocyte cell membrane. Required for the ATP13A2-mediated regulation of the autophagy-lysosome pathway. This is Synaptotagmin-11 from Homo sapiens (Human).